The following is a 726-amino-acid chain: Netrin-A (726 aa).

The signal sequence occupies residues 1-29 (MIRGILLLLLGTTRFSPIQCISNDVYFKM). A Laminin N-terminal domain is found at 46–312 (EPRACIPDFV…AISDFSVGGR (267 aa)). Asparagine 108, asparagine 112, and asparagine 127 each carry an N-linked (GlcNAc...) asparagine glycan. 12 disulfides stabilise this stretch: cysteine 313-cysteine 322, cysteine 315-cysteine 332, cysteine 334-cysteine 343, cysteine 346-cysteine 366, cysteine 369-cysteine 378, cysteine 371-cysteine 396, cysteine 399-cysteine 408, cysteine 411-cysteine 429, cysteine 432-cysteine 444, cysteine 434-cysteine 451, cysteine 453-cysteine 462, and cysteine 465-cysteine 479. Laminin EGF-like domains lie at 313–368 (CKCN…ECKE), 369–431 (CNCN…VCKA), and 432–481 (CDCH…PCIK). An N-linked (GlcNAc...) asparagine glycan is attached at asparagine 445. The tract at residues 490-516 (LDTQNTAPEPDEPESSPGSGGDRNGAA) is disordered. 2 cysteine pairs are disulfide-bonded: cysteine 533–cysteine 671 and cysteine 549–cysteine 725. Positions 533–725 (CGKCRVSTKR…KRFQRRARTC (193 aa)) constitute an NTR domain. N-linked (GlcNAc...) asparagine glycans are attached at residues asparagine 652 and asparagine 679.

At the midline of developing CNS at the time of commissure formation and in different subsets of neurons, muscles, and epidermal patches.

It localises to the secreted. Its subcellular location is the extracellular space. The protein resides in the extracellular matrix. Functionally, netrins control guidance of CNS commissural axons at the midline and peripheral motor axons to their target muscles. The protein is Netrin-A (NetA) of Drosophila melanogaster (Fruit fly).